The sequence spans 305 residues: tRNA pseudouridine synthase B (305 aa).

The active-site Nucleophile is D39. The region spanning 237-305 is the PUA domain; sequence LPVIIVPGEF…FLLKPHKVLK (69 aa).

Belongs to the pseudouridine synthase TruB family. Type 1 subfamily.

The catalysed reaction is uridine(55) in tRNA = pseudouridine(55) in tRNA. Responsible for synthesis of pseudouridine from uracil-55 in the psi GC loop of transfer RNAs. In Moorella thermoacetica (strain ATCC 39073 / JCM 9320), this protein is tRNA pseudouridine synthase B.